The primary structure comprises 658 residues: Biosynthetic arginine decarboxylase (658 aa).

Residue lysine 127 is modified to N6-(pyridoxal phosphate)lysine. A substrate-binding site is contributed by 307-317 (FDVGGGLGVDY).

This sequence belongs to the Orn/Lys/Arg decarboxylase class-II family. SpeA subfamily. Requires Mg(2+) as cofactor. Pyridoxal 5'-phosphate is required as a cofactor.

It carries out the reaction L-arginine + H(+) = agmatine + CO2. The protein operates within amine and polyamine biosynthesis; agmatine biosynthesis; agmatine from L-arginine: step 1/1. Its function is as follows. Catalyzes the biosynthesis of agmatine from arginine. The sequence is that of Biosynthetic arginine decarboxylase from Salmonella typhi.